Consider the following 152-residue polypeptide: Keratin, high-sulfur matrix protein, B2C (152 aa).

Ala2 bears the N-acetylalanine mark. 3 consecutive repeats follow at residues 27 to 36 (STCSQTSCCQ), 37 to 46 (PTSIQTSCCQ), and 47 to 56 (PTCLQTSGCE).

Its function is as follows. The keratin products of mammalian epidermal derivatives such as wool and hair consist of microfibrils embedded in a rigid matrix of other proteins. The matrix proteins include the high-sulfur and high-tyrosine keratins, having molecular weights of 6-20 kDa, whereas the microfibrils contain the larger, low-sulfur keratins (40-56 kDa). The sequence is that of Keratin, high-sulfur matrix protein, B2C from Ovis aries (Sheep).